Reading from the N-terminus, the 1411-residue chain is MKMLDLYGYTSIAQSFDKICISIASPESIRAMSYGEIKDISTTNYRTFKVEKGGLFCPKIFGPVNDDECLCGKYRKKRYRGVICEKCGVEVTSSKVRRERMGHIELVSPVAHVWFLKSLPSRIGALLDMPLKLIESILYSGDFVVIDPIATPLSKGEVISESAYNQAKDNYGEDSFIALTGAEAIRELLVRLDLHAINANLRSELESTTSEMKRKKIVKRLRIVENFINSGNKPEWMILTVIPILPPDLRPLVSLENGRPAVSDLNHHYRTIINRNNRLGKLLKLNPPAIMIRNEKRMLQEAVDALFDSTRRSYVSNKAGSVGYKKSLSDMLKGKQGRFRQNLLGKRVDYSGRSVIVVGPNLKLHQCGLPKKMALELFKPFICSKLKMYGIVPTVKLANKMIQNEKPEVWDILDEVIHEHPILLNRAPTLHRLGIQAFDPVLIEGKAIQLHPLVCSAFNADFDGDQMAVHIPLSLEAQLEARILMMSTNNILSPSNGKPIIVPSKDIILGIYYLTLQDYVEPEEILFFGDFSHVEYALHNKDIHICSKIKYKMNYCTDSSDGNGPTYYSKIVETTPGRLMLWQIFPEHKNLTFDLVNQVLTVKEITAIVDLVYRSCGQSETVEFSDKLMSLGFRYASQSGISFGRMDMIIPDTKTMHVDNASEKIKEFAVQYQDGLITKSERYNKVIDEWSKCTDLIAKDMMKAISVYDEESKLNSIYMMAHSGARGSASQMKQLAGMRGLMAKPSGEIIETPIISNFREGLNVFEYFNSTHGARKGLADTALKTANSGYLTRRLVDVAQDCIVVEYDCKTHNGFAMRSVIDGGTVVETLDNIILGRVAAVDIYNPITKELLVNAGELIDEAKVEKIRIAGLDAVKVRSPLTCEAKKGICALCYGRDLAIGDVVSIGEAVGVIAAQSVGEPGTQLTMRTFHVGGTAMRGVETSNLIAMLDAKVKLVNSNVVEDKYGNKIVMSRSCDVVLLDSVGNEKMRHSVPYGARLYVNDGQLVKITEKIADWDPYTMPIITEKTGIIKYMDLIDGVSINEVLDESTGISNRVVVDWKLHLQGANLRPRLVLVNDNGDIITLSSGLEANYFIPIGAVLSVQDGQKVHAGDVITRIPRESIKTRDITGGLPRVIELFEARRPKEHAIVSDIDGYVEFGKDYYRSKRRIFIKPVDDKLSPVEYLVPKGKHTIVNEGDFVHKGDLLMDGDPDPHDILRVLGVEALANYMIAEIQQVYRLQGVRIDNKHIEVILRQMLQKVEIFEPGDTMYLVGENVDVEEVLKTNSNMEKIGKSPAKYIPILQGITRASLDTNSFVSAASFQETTKVLTEAAFSGKEDSLYGLKENVIVGRLIPAGTGFLMNKIKKLSLLNKDDYSMYYNSEYQDLASIEAGHACSVSPSQGVSDTSGAVDY.

Zn(2+)-binding residues include C69, C71, C84, and C87. The Mg(2+) site is built by D461, D463, and D465. Residues C809, C883, C890, and C893 each contribute to the Zn(2+) site.

This sequence belongs to the RNA polymerase beta' chain family. As to quaternary structure, the RNAP catalytic core consists of 2 alpha, 1 beta, 1 beta' and 1 omega subunit. When a sigma factor is associated with the core the holoenzyme is formed, which can initiate transcription. Mg(2+) is required as a cofactor. Requires Zn(2+) as cofactor.

It catalyses the reaction RNA(n) + a ribonucleoside 5'-triphosphate = RNA(n+1) + diphosphate. Functionally, DNA-dependent RNA polymerase catalyzes the transcription of DNA into RNA using the four ribonucleoside triphosphates as substrates. The chain is DNA-directed RNA polymerase subunit beta' from Ehrlichia ruminantium (strain Welgevonden).